The sequence spans 226 residues: Urease accessory protein UreG (226 aa).

Residues Met-1–Pro-26 are disordered. Gly-33–Thr-40 contacts GTP.

This sequence belongs to the SIMIBI class G3E GTPase family. UreG subfamily. Homodimer. UreD, UreF and UreG form a complex that acts as a GTP-hydrolysis-dependent molecular chaperone, activating the urease apoprotein by helping to assemble the nickel containing metallocenter of UreC. The UreE protein probably delivers the nickel.

Its subcellular location is the cytoplasm. Functionally, facilitates the functional incorporation of the urease nickel metallocenter. This process requires GTP hydrolysis, probably effectuated by UreG. This is Urease accessory protein UreG from Mycolicibacterium vanbaalenii (strain DSM 7251 / JCM 13017 / BCRC 16820 / KCTC 9966 / NRRL B-24157 / PYR-1) (Mycobacterium vanbaalenii).